Here is a 302-residue protein sequence, read N- to C-terminus: 4-hydroxy-tetrahydrodipicolinate synthase (302 aa).

Thr-55 contacts pyruvate. Tyr-144 (proton donor/acceptor) is an active-site residue. Catalysis depends on Lys-172, which acts as the Schiff-base intermediate with substrate. Val-214 is a binding site for pyruvate.

It belongs to the DapA family. As to quaternary structure, homotetramer; dimer of dimers.

The protein resides in the cytoplasm. It carries out the reaction L-aspartate 4-semialdehyde + pyruvate = (2S,4S)-4-hydroxy-2,3,4,5-tetrahydrodipicolinate + H2O + H(+). Its pathway is amino-acid biosynthesis; L-lysine biosynthesis via DAP pathway; (S)-tetrahydrodipicolinate from L-aspartate: step 3/4. In terms of biological role, catalyzes the condensation of (S)-aspartate-beta-semialdehyde [(S)-ASA] and pyruvate to 4-hydroxy-tetrahydrodipicolinate (HTPA). The sequence is that of 4-hydroxy-tetrahydrodipicolinate synthase from Prochlorococcus marinus (strain MIT 9211).